A 1509-amino-acid polypeptide reads, in one-letter code: Putative endo-alpha-N-acetylgalactosaminidase (1509 aa).

The signal sequence occupies residues 1 to 41 (MPFRGRRRQSALRGLSLAATFCLAAGSSGISGALFATPAQA). Ca(2+) is bound by residues Asp288, Asn290, Asp292, Lys294, and Asp299. A catalytic region spans residues 313–585 (GGDDVKNRVV…NLPVKFLQQQ (273 aa)). Asp369 is a binding site for substrate. The Nucleophile role is filled by Asp472. Residue Glu498 is the Proton donor/acceptor of the active site. Ca(2+) is bound by residues Asn878, Glu880, Asp926, and Tyr929. 2 disordered regions span residues 1176–1197 (NGWGPVEKDQANGEQAQGDGPP) and 1403–1439 (IKAANPNPGTGSNPGTGSNPGTDPGTGSAGGNSSGGG). The span at 1407 to 1428 (NPNPGTGSNPGTGSNPGTDPGT) shows a compositional bias: low complexity. The span at 1429–1439 (GSAGGNSSGGG) shows a compositional bias: gly residues. Residues 1475-1479 (LAETG) carry the LPXTG sorting signal motif. At Thr1478 the chain carries Pentaglycyl murein peptidoglycan amidated threonine. Positions 1479-1509 (GFSGLVLPLGIGLMLLLIGAAAIIVRRHRHS) are cleaved as a propeptide — removed by sortase.

The protein belongs to the glycosyl hydrolase 101 family. A subfamily.

It localises to the secreted. It is found in the cell wall. It catalyses the reaction a 3-O-[beta-D-galactosyl-(1-&gt;3)-N-acetyl-alpha-D-galactosaminyl]-L-threonyl-[protein] + H2O = beta-D-galactosyl-(1-&gt;3)-N-acetyl-D-galactosamine + L-threonyl-[protein]. The enzyme catalyses a 3-O-[beta-D-galactosyl-(1-&gt;3)-N-acetyl-alpha-D-galactosaminyl]-L-seryl-[protein] + H2O = beta-D-galactosyl-(1-&gt;3)-N-acetyl-D-galactosamine + L-seryl-[protein]. Its function is as follows. Probably involved in the breakdown of mucin-type O-linked glycans. Specifically removes the T-antigen disaccharide (Gal-beta-1,3-GalNAc-alpha) from extracellular host glycoproteins. This chain is Putative endo-alpha-N-acetylgalactosaminidase, found in Renibacterium salmoninarum (strain ATCC 33209 / DSM 20767 / JCM 11484 / NBRC 15589 / NCIMB 2235).